The primary structure comprises 388 residues: Pepsin A-4 (388 aa).

A signal peptide spans 1–15; sequence MKWLLLLGLVALSEC. Residues 16 to 62 constitute a propeptide, activation peptide; the sequence is IMYKVPLIRKKSLRRTLSERGLLKDFLKKHNLNPARKYFPQWEAPTL. In terms of domain architecture, Peptidase A1 spans 76–385; it reads YFGTIGIGTP…DRANNQVGLA (310 aa). The active site involves Asp94. A disulfide bridge connects residues Cys107 and Cys112. A Phosphoserine modification is found at Ser130. Cys268 and Cys272 are joined by a disulfide. Asp277 is a catalytic residue. Cysteines 311 and 344 form a disulfide.

It belongs to the peptidase A1 family.

Its subcellular location is the secreted. The enzyme catalyses Preferential cleavage: hydrophobic, preferably aromatic, residues in P1 and P1' positions. Cleaves 1-Phe-|-Val-2, 4-Gln-|-His-5, 13-Glu-|-Ala-14, 14-Ala-|-Leu-15, 15-Leu-|-Tyr-16, 16-Tyr-|-Leu-17, 23-Gly-|-Phe-24, 24-Phe-|-Phe-25 and 25-Phe-|-Tyr-26 bonds in the B chain of insulin.. Shows particularly broad specificity; although bonds involving phenylalanine and leucine are preferred, many others are also cleaved to some extent. The chain is Pepsin A-4 (PGA4) from Homo sapiens (Human).